A 328-amino-acid chain; its full sequence is Tetraacyldisaccharide 4'-kinase (328 aa).

ATP is bound at residue 55–62 (TAGGNGKT).

It belongs to the LpxK family.

The enzyme catalyses a lipid A disaccharide + ATP = a lipid IVA + ADP + H(+). Its pathway is glycolipid biosynthesis; lipid IV(A) biosynthesis; lipid IV(A) from (3R)-3-hydroxytetradecanoyl-[acyl-carrier-protein] and UDP-N-acetyl-alpha-D-glucosamine: step 6/6. Its function is as follows. Transfers the gamma-phosphate of ATP to the 4'-position of a tetraacyldisaccharide 1-phosphate intermediate (termed DS-1-P) to form tetraacyldisaccharide 1,4'-bis-phosphate (lipid IVA). This is Tetraacyldisaccharide 4'-kinase from Shigella boydii serotype 4 (strain Sb227).